The sequence spans 264 residues: Apolipoprotein A-I (264 aa).

The first 18 residues, Met-1–Ala-18, serve as a signal peptide directing secretion. 2 tandem repeats follow at residues Leu-67–Gly-88 and Pro-89–Asn-110. Positions Leu-67–Gln-264 are 10 X approximate tandem repeats. Methionine sulfoxide is present on Met-109. A 3; half-length repeat occupies Lys-111–Gln-121. 3 tandem repeats follow at residues Pro-122 to Gly-143, Pro-144 to Val-165, and Pro-166 to Ser-187. A 7; truncated repeat occupies Pro-188–Ser-207. Met-193 carries the post-translational modification Methionine sulfoxide. Residues Thr-208–Lys-229 form repeat 8. Residues Pro-230–Thr-240 form a 9; half-length repeat. Copy 10 of the repeat occupies Pro-241–Gln-264. At Met-242 the chain carries Methionine sulfoxide.

The protein belongs to the apolipoprotein A1/A4/E family. Homodimer. Interacts with APOA1BP and CLU. Component of a sperm activating protein complex (SPAP), consisting of APOA1, an immunoglobulin heavy chain, an immunoglobulin light chain and albumin. Interacts with NDRG1. Interacts with SCGB3A2. Interacts with NAXE and YJEFN3. Post-translationally, glycosylated. In terms of processing, palmitoylated. Phosphorylation sites are present in the extracellular medium.

It is found in the secreted. Its function is as follows. Participates in the reverse transport of cholesterol from tissues to the liver for excretion by promoting cholesterol efflux from tissues and by acting as a cofactor for the lecithin cholesterol acyltransferase (LCAT). As part of the SPAP complex, activates spermatozoa motility. The protein is Apolipoprotein A-I (Apoa1) of Peromyscus maniculatus bairdii (Prairie deer mouse).